Reading from the N-terminus, the 182-residue chain is UPF0397 protein BCAH187_A2708 (182 aa).

A run of 5 helical transmembrane segments spans residues 9–29 (VVAIGIGAALYGILGLWGFSI), 40–60 (AILTVFGALFGPVAGLLIGLI), 71–91 (WGIWWGWVISSGIIGFAMGFI), 114–134 (ITGLIGIVIAIIFAGAFDIIV), and 142–162 (IVIQVLGATIADVIVFLVLGL).

The protein belongs to the UPF0397 family.

Its subcellular location is the cell membrane. This Bacillus cereus (strain AH187) protein is UPF0397 protein BCAH187_A2708.